The primary structure comprises 469 residues: Protein translocase subunit SecY (469 aa).

At 1 to 20 (MSFIDSLATLGQYLPAVTKP) the chain is on the cytoplasmic side. The chain crosses the membrane as a helical span at residues 21–47 (KEKPSLGQKLVWSLVAVIIYLIMASTP). At 48-59 (LYGITSASFFKN) the chain is on the extracellular side. Positions 60-67 (LILEQIIF) form an intramembrane region, helical. Residues 60-88 (LILEQIIFASTTGTLAQLGIGPIITAGLI) form a discontinuously helical membrane-spanning segment. An intramembrane segment occupies 68–79 (ASTTGTLAQLGI). An intramembrane region (helical) is located at residues 80–88 (GPIITAGLI). Over 89-109 (MQILAGSKLISIDLNDPDDRV) the chain is Cytoplasmic. The chain crosses the membrane as a helical span at residues 110–131 (KFTEAQKGLAFIFILVESALFG). Over 132–146 (YVLARTSTTINASIL) the chain is Extracellular. The helical transmembrane segment at 147–171 (FIAGIVIAQLIVATYLILLLDELIQ) threads the bilayer. The Cytoplasmic portion of the chain corresponds to 172–178 (KGWGLGS). The helical transmembrane segment at 179–197 (GVSLFILAGVMKIMFWDMF) threads the bilayer. Over 198-240 (GIASVSSQNLPIGFFPALFTALASHSDVLNLIVNTSTKNLFQP) the chain is Extracellular. Residues 241–262 (DLVGLVTTIALIIITIYLTTMT) form a helical membrane-spanning segment. Topologically, residues 263–287 (IEIPVTSQKLRGIRRTIPLNFLYVS) are cytoplasmic. A helical membrane pass occupies residues 288-309 (SIPVIFVAVLGSDIQLFASLAS). Residues 310-347 (YVSPSASNILNTVSGVFFFPPPNSAIPHSIYAVVLDPL) are Extracellular-facing. A helical membrane pass occupies residues 348 to 367 (GALEYAVVFIVLSILFGILW). Topologically, residues 368 to 410 (VDVAGLDPATQAQQLVEAGIEIPGVRNNPKIIEGILARYIYPL) are cytoplasmic. A helical transmembrane segment spans residues 411-429 (AFFSSIIVGLIAVFATLLG). Over 430-432 (AYG) the chain is Extracellular. The chain crosses the membrane as a helical span at residues 433 to 447 (TGIGILLAVTIAIQY). Residues 448 to 469 (YSLLAYERSLEMYPLLKRLIGE) lie on the Cytoplasmic side of the membrane.

The protein belongs to the SecY/SEC61-alpha family. In terms of assembly, component of the Sec protein translocase complex. Heterotrimer consisting of alpha (SecY), beta (SecG) and gamma (SecE) subunits. The heterotrimers can form oligomers, although 1 heterotrimer is thought to be able to translocate proteins. Interacts with the ribosome. May interact with SecDF, and other proteins may be involved.

It is found in the cell membrane. Its function is as follows. The central subunit of the protein translocation channel SecYEG. Consists of two halves formed by TMs 1-5 and 6-10. These two domains form a lateral gate at the front which open onto the bilayer between TMs 2 and 7, and are clamped together by SecE at the back. The channel is closed by both a pore ring composed of hydrophobic SecY resides and a short helix (helix 2A) on the extracellular side of the membrane which forms a plug. The plug probably moves laterally to allow the channel to open. The ring and the pore may move independently. This chain is Protein translocase subunit SecY, found in Saccharolobus solfataricus (strain ATCC 35092 / DSM 1617 / JCM 11322 / P2) (Sulfolobus solfataricus).